The primary structure comprises 1275 residues: Serine/threonine-protein kinase ULK4 (1275 aa).

One can recognise a Protein kinase domain in the interval 4–280; that stretch reads FILYEEIGRG…WTRLLQHSFW (277 aa). Disordered stretches follow at residues 299–350 and 364–392; these read SRNT…KSTL and RPTP…TSPL. The span at 336-348 shows a compositional bias: basic and acidic residues; it reads FRLENPTEFRPKS. Positions 364 to 373 are enriched in polar residues; sequence RPTPRTSTAV. HEAT repeat units follow at residues 842–880, 926–964, 1025–1063, 1151–1189, and 1213–1253; these read LKLC…ILSH, STVV…LLVN, LVEE…NLVA, NRPL…LYGG, and PKEQ…LAPG.

It belongs to the protein kinase superfamily. Ser/Thr protein kinase family. APG1/unc-51/ULK1 subfamily. As to expression, expressed in the brain, mainly in postmitotic neurons, including GABAergic neurons, but not in astrocytes (at protein level).

It carries out the reaction L-seryl-[protein] + ATP = O-phospho-L-seryl-[protein] + ADP + H(+). The catalysed reaction is L-threonyl-[protein] + ATP = O-phospho-L-threonyl-[protein] + ADP + H(+). In terms of biological role, may be involved in the remodeling of cytoskeletal components, such as alpha-tubulin, and in this way regulates neurite branching and elongation, as well as cell motility. The protein is Serine/threonine-protein kinase ULK4 (ULK4) of Homo sapiens (Human).